The primary structure comprises 812 residues: DNA translocase FtsK 1 (812 aa).

Basic residues predominate over residues 1–11 (MTEKSHKKTAK). The interval 1–36 (MTEKSHKKTAKGRAGSPSPTSARNKKADNGARGNKV) is disordered. The segment covering 25 to 36 (KKADNGARGNKV) has biased composition (basic and acidic residues). 5 helical membrane-spanning segments follow: residues 63–83 (IGDA…ISLI), 116–136 (VGYY…CVVL), 156–176 (IAAA…YFVL), 184–204 (LPVG…AWLL), and 210–230 (LLII…ISWL). The Cytoplasmic segment spans residues 231 to 812 (EFLNGAGRAV…RKILAHKDHL (582 aa)). The FtsK domain maps to 461–670 (GTPVVGDLAK…FTVQSKIDSR (210 aa)). ATP is bound at residue 481-486 (GSGKSV).

It belongs to the FtsK/SpoIIIE/SftA family. As to quaternary structure, homohexamer. Forms a ring that surrounds DNA.

Its subcellular location is the cell inner membrane. Its function is as follows. Essential cell division protein that coordinates cell division and chromosome segregation. The N-terminus is involved in assembly of the cell-division machinery. The C-terminus functions as a DNA motor that moves dsDNA in an ATP-dependent manner towards the dif recombination site, which is located within the replication terminus region. Translocation stops specifically at Xer-dif sites, where FtsK interacts with the Xer recombinase, allowing activation of chromosome unlinking by recombination. FtsK orienting polar sequences (KOPS) guide the direction of DNA translocation. FtsK can remove proteins from DNA as it translocates, but translocation stops specifically at XerCD-dif site, thereby preventing removal of XerC and XerD from dif. The protein is DNA translocase FtsK 1 (ftsK1) of Neisseria meningitidis serogroup B (strain ATCC BAA-335 / MC58).